Here is a 61-residue protein sequence, read N- to C-terminus: MATIVVKQIGSPIRRPEIQRKTLIGLGLNKMHRTRELEDTPSVRGMINKIPHLVEIVEERG.

This sequence belongs to the universal ribosomal protein uL30 family. As to quaternary structure, part of the 50S ribosomal subunit.

The protein is Large ribosomal subunit protein uL30 of Jannaschia sp. (strain CCS1).